Consider the following 368-residue polypeptide: 3-dehydroquinate synthase (368 aa).

Residues 71–76, 105–109, 129–130, K142, K151, and 169–172 contribute to the NAD(+) site; these read DGEAFK, GVVGD, TT, and TLRT. 3 residues coordinate Zn(2+): E184, H247, and H264.

It belongs to the sugar phosphate cyclases superfamily. Dehydroquinate synthase family. Requires Co(2+) as cofactor. The cofactor is Zn(2+). NAD(+) serves as cofactor.

Its subcellular location is the cytoplasm. The enzyme catalyses 7-phospho-2-dehydro-3-deoxy-D-arabino-heptonate = 3-dehydroquinate + phosphate. It participates in metabolic intermediate biosynthesis; chorismate biosynthesis; chorismate from D-erythrose 4-phosphate and phosphoenolpyruvate: step 2/7. Functionally, catalyzes the conversion of 3-deoxy-D-arabino-heptulosonate 7-phosphate (DAHP) to dehydroquinate (DHQ). In Cupriavidus pinatubonensis (strain JMP 134 / LMG 1197) (Cupriavidus necator (strain JMP 134)), this protein is 3-dehydroquinate synthase.